Reading from the N-terminus, the 613-residue chain is Zinc metalloproteinase-disintegrin-like atragin (613 aa).

Positions 1-20 (MIQALLVIICLAVFPHQGSS) are cleaved as a signal peptide. Residues 21–191 (IILESGNVND…DESIEKTSQL (171 aa)) constitute a propeptide that is removed on maturation. Residues 205 to 400 (KYIEFYVVVD…DRPQCILNKP (196 aa)) enclose the Peptidase M12B domain. Ca(2+)-binding residues include Glu208 and Asp292. Disulfide bonds link Cys316–Cys395 and Cys356–Cys379. 3 residues coordinate Zn(2+): His341, His345, and His351. Ca(2+) is bound by residues Cys395, Asn398, Ile410, Asn413, Phe415, Glu417, Glu420, and Asp423. Residues 408-494 (PPICGNYFVE…ECPTDVFQRN (87 aa)) form the Disintegrin domain. 15 cysteine pairs are disulfide-bonded: Cys411-Cys440, Cys422-Cys435, Cys424-Cys430, Cys434-Cys457, Cys448-Cys454, Cys453-Cys479, Cys466-Cys486, Cys473-Cys505, Cys498-Cys510, Cys517-Cys567, Cys532-Cys575, Cys542-Cys577, Cys545-Cys555, Cys562-Cys601, and Cys595-Cys606. The N-linked (GlcNAc...) asparagine glycan is linked to Asn436. The D/ECD-tripeptide motif lies at 472 to 474 (DCD). Ca(2+) is bound by residues Asp474, Leu475, Glu477, Asp489, and Val490. The tract at residues 560–574 (VKCGRLFCKRRNSMI) is hypervariable region that may play important roles toward cell migration.

Belongs to the venom metalloproteinase (M12B) family. P-III subfamily. P-IIIa sub-subfamily. As to quaternary structure, monomer. The cofactor is Zn(2+). As to expression, expressed by the venom gland.

It is found in the secreted. Snake venom zinc metalloproteinase that seems to inhibit cell migration. This activity is dominated by the local structure of the hyper-variable region. The polypeptide is Zinc metalloproteinase-disintegrin-like atragin (Naja atra (Chinese cobra)).